A 339-amino-acid chain; its full sequence is tRNA N6-adenosine threonylcarbamoyltransferase (339 aa).

Fe cation contacts are provided by H111 and H115. Substrate-binding positions include 139–143 (LVSGG), D172, G185, D189, and N280. D308 contacts Fe cation.

It belongs to the KAE1 / TsaD family. The cofactor is Fe(2+).

Its subcellular location is the cytoplasm. The enzyme catalyses L-threonylcarbamoyladenylate + adenosine(37) in tRNA = N(6)-L-threonylcarbamoyladenosine(37) in tRNA + AMP + H(+). In terms of biological role, required for the formation of a threonylcarbamoyl group on adenosine at position 37 (t(6)A37) in tRNAs that read codons beginning with adenine. Is involved in the transfer of the threonylcarbamoyl moiety of threonylcarbamoyl-AMP (TC-AMP) to the N6 group of A37, together with TsaE and TsaB. TsaD likely plays a direct catalytic role in this reaction. The sequence is that of tRNA N6-adenosine threonylcarbamoyltransferase from Phocaeicola vulgatus (strain ATCC 8482 / DSM 1447 / JCM 5826 / CCUG 4940 / NBRC 14291 / NCTC 11154) (Bacteroides vulgatus).